Consider the following 246-residue polypeptide: DNA polymerase sliding clamp (246 aa).

It belongs to the PCNA family. Homotrimer. The subunits circularize to form a toroid; DNA passes through its center. Replication factor C (RFC) is required to load the toroid on the DNA.

Functionally, sliding clamp subunit that acts as a moving platform for DNA processing. Responsible for tethering the catalytic subunit of DNA polymerase and other proteins to DNA during high-speed replication. The chain is DNA polymerase sliding clamp from Thermoplasma volcanium (strain ATCC 51530 / DSM 4299 / JCM 9571 / NBRC 15438 / GSS1).